The primary structure comprises 373 residues: Putative glutamate--cysteine ligase 2-1 (373 aa).

This sequence belongs to the glutamate--cysteine ligase type 2 family. YbdK subfamily.

It carries out the reaction L-cysteine + L-glutamate + ATP = gamma-L-glutamyl-L-cysteine + ADP + phosphate + H(+). ATP-dependent carboxylate-amine ligase which exhibits weak glutamate--cysteine ligase activity. The protein is Putative glutamate--cysteine ligase 2-1 of Legionella pneumophila (strain Lens).